The following is a 273-amino-acid chain: Undecaprenyl-diphosphatase (273 aa).

Helical transmembrane passes span 4 to 24 (IELL…WLPI), 45 to 65 (FMSM…VVLF), 84 to 104 (TFTL…MIPF), 112 to 132 (FFNP…FIII), 149 to 169 (ITYQ…IPGT), 187 to 207 (YVAA…ASLL), 219 to 239 (AEIV…IIVI), and 251 to 271 (FKVF…YFLL).

Belongs to the UppP family.

The protein localises to the cell membrane. The catalysed reaction is di-trans,octa-cis-undecaprenyl diphosphate + H2O = di-trans,octa-cis-undecaprenyl phosphate + phosphate + H(+). Its function is as follows. Catalyzes the dephosphorylation of undecaprenyl diphosphate (UPP). Confers resistance to bacitracin. The sequence is that of Undecaprenyl-diphosphatase from Lachnoclostridium phytofermentans (strain ATCC 700394 / DSM 18823 / ISDg) (Clostridium phytofermentans).